A 136-amino-acid chain; its full sequence is Large ribosomal subunit protein eL27 (136 aa).

The 32-residue stretch at 5-36 folds into the KOW domain; that stretch reads MKPGKVVLVLRGKYAGRKAVVVKQQDEGVSDR.

It belongs to the eukaryotic ribosomal protein eL27 family. As to quaternary structure, component of the large ribosomal subunit.

It localises to the cytoplasm. Its subcellular location is the cytosol. It is found in the rough endoplasmic reticulum. Component of the large ribosomal subunit. This is Large ribosomal subunit protein eL27 (rpl-27) from Caenorhabditis elegans.